A 350-amino-acid polypeptide reads, in one-letter code: Tsukushi (350 aa).

Residues 1 to 17 (MAPSWLFLLFIPGMVGS) form the signal peptide. In terms of domain architecture, LRRNT spans 18 to 59 (SRSCFPGCQCIVDNFGLFHSFSLTKVDCSGVGPHVVPVSIPL). 10 LRR repeats span residues 60–81 (DTSY…VLSG), 86–107 (TLIN…TFSK), 110–131 (YLES…SFLY), 133–154 (RLTE…AFTL), 159–180 (RSMT…AERP), 183–203 (NIHS…LHGI), 204–225 (PLRH…SFLG), 228–250 (GLTH…SFKT), 253–275 (SLLD…MFFG), and 278–299 (SLQE…IMLN). N-linked (GlcNAc...) asparagine glycans are attached at residues Asn75 and Asn91.

As to quaternary structure, interacts with bmp4. Interacts with dll1 (via extracellular region). Interacts with fgf8; inhibits fgf8 signaling. Interacts with nodal2/Xnr2; enhances nodal2 activity.

The protein resides in the secreted. In terms of biological role, contributes to various developmental events through its interactions with multiple signaling pathways. Dorsalizing factor which functions as an inhibitor of bone morphogenetic proteins (BMP) during gastrulation. Promotes dll1-dependent activation of Notch signaling and is required for neural crest formation. Induces endoderm and dorsal mesoderm formation by enhancing nodal2/Xnr2 activity while inhibiting ventrolateral mesoderm formation through inhibition of fgf8. The sequence is that of Tsukushi (tsku) from Xenopus tropicalis (Western clawed frog).